The following is a 526-amino-acid chain: Hyaluronidase-5 (526 aa).

An N-terminal signal peptide occupies residues 1-35; the sequence is MRVLYFKHSFFRSLLKSNGLPQTLLVFLLIPCYLT. 5 disulfides stabilise this stretch: C60–C351, C223–C237, C376–C387, C381–C435, and C437–C443. Catalysis depends on E147, which acts as the Proton donor. 2 N-linked (GlcNAc...) asparagine glycosylation sites follow: N165 and N179.

This sequence belongs to the glycosyl hydrolase 56 family. Expressed in testis, epididymal sperm and epididymides (at protein level). Expressed at highest levels in testis with lesser amounts in epididymal sperm.

Its subcellular location is the cell membrane. The protein localises to the cytoplasmic vesicle. It is found in the secretory vesicle. It localises to the acrosome membrane. The protein resides in the secreted. The enzyme catalyses Random hydrolysis of (1-&gt;4)-linkages between N-acetyl-beta-D-glucosamine and D-glucuronate residues in hyaluronate.. Functionally, catalyzes the hydrolysis of hyaluronan into smaller oligosaccharide fragments. Does not appear to be essential for fertilization. The polypeptide is Hyaluronidase-5 (Mus musculus (Mouse)).